A 415-amino-acid polypeptide reads, in one-letter code: Serine hydroxymethyltransferase (415 aa).

Residues Leu-117 and 121-123 contribute to the (6S)-5,6,7,8-tetrahydrofolate site; that span reads GHL. The residue at position 226 (Lys-226) is an N6-(pyridoxal phosphate)lysine.

Belongs to the SHMT family. Homodimer. Requires pyridoxal 5'-phosphate as cofactor.

The protein localises to the cytoplasm. The catalysed reaction is (6R)-5,10-methylene-5,6,7,8-tetrahydrofolate + glycine + H2O = (6S)-5,6,7,8-tetrahydrofolate + L-serine. It participates in one-carbon metabolism; tetrahydrofolate interconversion. Its pathway is amino-acid biosynthesis; glycine biosynthesis; glycine from L-serine: step 1/1. Its function is as follows. Catalyzes the reversible interconversion of serine and glycine with tetrahydrofolate (THF) serving as the one-carbon carrier. This reaction serves as the major source of one-carbon groups required for the biosynthesis of purines, thymidylate, methionine, and other important biomolecules. Also exhibits THF-independent aldolase activity toward beta-hydroxyamino acids, producing glycine and aldehydes, via a retro-aldol mechanism. The protein is Serine hydroxymethyltransferase of Leptospira borgpetersenii serovar Hardjo-bovis (strain JB197).